A 186-amino-acid chain; its full sequence is MKGGSIELGEVSKNASTNKGVKRGLSIMDFILRIIAGVATLASAVAMGTTDERLPFATSFVQFRAEYDDLPSFVFFVLANSIVCGYLALSLILSILHIVRSTAVKSRILLIVLDMVMMGLLAAAASAAASIVYIAHYGNTQANWFPICQQYNSFCERISGSLIGSYIAVALFIIIILLSQSAISRN.

Residues 1–26 (MKGGSIELGEVSKNASTNKGVKRGLS) are Cytoplasmic-facing. A helical membrane pass occupies residues 27–47 (IMDFILRIIAGVATLASAVAM). Topologically, residues 48–72 (GTTDERLPFATSFVQFRAEYDDLPS) are extracellular. Residues 73–93 (FVFFVLANSIVCGYLALSLIL) traverse the membrane as a helical segment. Over 94 to 107 (SILHIVRSTAVKSR) the chain is Cytoplasmic. A helical transmembrane segment spans residues 108–128 (ILLIVLDMVMMGLLAAAASAA). The Extracellular segment spans residues 129-157 (ASIVYIAHYGNTQANWFPICQQYNSFCER). The helical transmembrane segment at 158-178 (ISGSLIGSYIAVALFIIIILL) threads the bilayer. The Cytoplasmic segment spans residues 179-186 (SQSAISRN).

This sequence belongs to the Casparian strip membrane proteins (CASP) family. In terms of assembly, homodimer and heterodimers.

It localises to the cell membrane. Regulates membrane-cell wall junctions and localized cell wall deposition. Required for establishment of the Casparian strip membrane domain (CSD) and the subsequent formation of Casparian strips, a cell wall modification of the root endodermis that determines an apoplastic barrier between the intraorganismal apoplasm and the extraorganismal apoplasm and prevents lateral diffusion. In Medicago truncatula (Barrel medic), this protein is Casparian strip membrane protein 1.